We begin with the raw amino-acid sequence, 623 residues long: MGLVLKEFNNKIRTALILAPFFTFAQIVIDLIIPSFLASAISVVFSIDKLKQDESGGKTISVDFIGGANINFANVREAQIVLATTVILLALCGLFFGLISIYCASYVSANTSFLLRKKIFAKLMRITTPSHDHYGSSTLLVRLTNDVYLMEVIAFDFLRLIIRAPLLFIGGLVFAVTTNQDMSISLLITFPLILLVIGILNRKSIPLFKENQKSVDKINERVEEDVSGYKVIQSFNLHSFTNNKFKIANEGWKKNSTSSLFINSLNIPFTFFLSSLTIIIALLLVFQLDSSVSVDPLPQDAAIRPNIFAFFQYNFYIVLGFILTSLTMVNFNRSRVALGRIKDILSQPEIKTITNKDQKELLPTLEFRNISFGLGNKNNNNFLQNLSFKFEAYKTYGIVGPTGSGKSLIANIIGGLYEPNEGEILIGGEKIQSIDSLYLSEMIGIVFQQNILFKGTISSNIKIGIETRSDWKNQSDLQKNEAMKNAAKIACADTFIEKFSDSYDHNVEQLGKNLSGGQKQRVAIARTLITKPRILVFDDSMSALDALTEKKVRENIENDLKLTTKIIISQNINSIKHADKILVIDNGRIVGFDSDQKLMKNCSLYQKMKESQKDLGGDFDAVN.

The ABC transmembrane type-1 domain occupies 16 to 325 (LILAPFFTFA…YIVLGFILTS (310 aa)). 6 consecutive transmembrane segments (helical) span residues 27–47 (IVID…VFSI), 81–101 (VLAT…LISI), 157–177 (FLRL…FAVT), 181–201 (DMSI…GILN), 266–286 (NIPF…LLVF), and 307–327 (IFAF…TSLT). Residues 365-611 (LEFRNISFGL…CSLYQKMKES (247 aa)) form the ABC transporter domain. 400–407 (GPTGSGKS) contacts ATP.

It belongs to the ABC transporter superfamily.

It is found in the cell membrane. The polypeptide is Putative ABC transporter ATP-binding protein MG014 (Mycoplasma genitalium (strain ATCC 33530 / DSM 19775 / NCTC 10195 / G37) (Mycoplasmoides genitalium)).